The following is a 342-amino-acid chain: Alternative oxidase, mitochondrial (342 aa).

A mitochondrion-targeting transit peptide spans 1–20; sequence MIKTYQYRSILNSRNVGIRF. The helical transmembrane segment at 135–155 threads the bilayer; the sequence is LTRCIFLESVAGVPGMVAAFI. Fe cation is bound by residues Glu142, Glu181, and His184. A helical transmembrane segment spans residues 200 to 220; sequence FIIYMGQGVFANLFFLVYLIK. Residues Glu232, Glu287, and His290 each contribute to the Fe cation site. Composition is skewed to basic and acidic residues over residues 308 to 321 and 330 to 342; these read PFAL…KEQQ and PHPE…QMRL. The interval 308-342 is disordered; it reads PFALKVEDVPKEQQPDEYSLKTPHPEGWNREQMRL.

Belongs to the alternative oxidase family. Homodimer; disulfide-linked. It depends on Fe cation as a cofactor.

It localises to the mitochondrion inner membrane. Its function is as follows. Catalyzes cyanide-resistant oxygen consumption. May increase respiration when the cytochrome respiratory pathway is restricted, or in response to low temperatures. In Wickerhamomyces anomalus (Yeast), this protein is Alternative oxidase, mitochondrial (AOX1).